We begin with the raw amino-acid sequence, 525 residues long: Probable protein kinase UbiB (525 aa).

The region spanning 119–501 (RFDHHPVASA…QRRTNRLLSA (383 aa)) is the Protein kinase domain. ATP contacts are provided by residues 125–133 (VASASIAQV) and Lys-151. Asp-286 serves as the catalytic Proton acceptor. The chain crosses the membrane as a helical span at residues 502-522 (ALLFIGGFAVGIIATHVLAWL).

It belongs to the ABC1 family. UbiB subfamily.

It is found in the cell inner membrane. It functions in the pathway cofactor biosynthesis; ubiquinone biosynthesis [regulation]. Its function is as follows. Is probably a protein kinase regulator of UbiI activity which is involved in aerobic coenzyme Q (ubiquinone) biosynthesis. The sequence is that of Probable protein kinase UbiB from Ralstonia nicotianae (strain ATCC BAA-1114 / GMI1000) (Ralstonia solanacearum).